A 215-amino-acid polypeptide reads, in one-letter code: FMN-dependent NADH:quinone oxidoreductase 1 (215 aa).

This sequence belongs to the azoreductase type 1 family. In terms of assembly, homodimer. It depends on FMN as a cofactor.

It catalyses the reaction 2 a quinone + NADH + H(+) = 2 a 1,4-benzosemiquinone + NAD(+). It carries out the reaction N,N-dimethyl-1,4-phenylenediamine + anthranilate + 2 NAD(+) = 2-(4-dimethylaminophenyl)diazenylbenzoate + 2 NADH + 2 H(+). Quinone reductase that provides resistance to thiol-specific stress caused by electrophilic quinones. In terms of biological role, also exhibits azoreductase activity. Catalyzes the reductive cleavage of the azo bond in aromatic azo compounds to the corresponding amines. The polypeptide is FMN-dependent NADH:quinone oxidoreductase 1 (Lactiplantibacillus plantarum (strain ATCC BAA-793 / NCIMB 8826 / WCFS1) (Lactobacillus plantarum)).